The sequence spans 146 residues: Hemoglobin subunit beta (146 aa).

The 145-residue stretch at 2-146 (HWSAEEKQLI…VAHSLARVYH (145 aa)) folds into the Globin domain. Heme b-binding residues include His-63 and His-92.

The protein belongs to the globin family. Heterotetramer of two alpha chains and two beta chains. Red blood cells.

Involved in oxygen transport from the lung to the various peripheral tissues. In Microcephalophis gracilis (Graceful small-headed sea snake), this protein is Hemoglobin subunit beta (HBB).